The primary structure comprises 386 residues: S-adenosylmethionine synthase (386 aa).

H16 provides a ligand contact to ATP. D18 serves as a coordination point for Mg(2+). K(+) is bound at residue E44. Positions 57 and 100 each coordinate L-methionine. The segment at 100 to 110 (QSPDINQGVDQ) is flexible loop. ATP contacts are provided by residues 164–166 (DGK), 230–231 (RF), D239, 245–246 (RK), A262, and K266. D239 contributes to the L-methionine binding site. Position 270 (K270) interacts with L-methionine.

It belongs to the AdoMet synthase family. In terms of assembly, homotetramer; dimer of dimers. Mg(2+) is required as a cofactor. The cofactor is K(+).

Its subcellular location is the cytoplasm. It carries out the reaction L-methionine + ATP + H2O = S-adenosyl-L-methionine + phosphate + diphosphate. The protein operates within amino-acid biosynthesis; S-adenosyl-L-methionine biosynthesis; S-adenosyl-L-methionine from L-methionine: step 1/1. Its function is as follows. Catalyzes the formation of S-adenosylmethionine (AdoMet) from methionine and ATP. The overall synthetic reaction is composed of two sequential steps, AdoMet formation and the subsequent tripolyphosphate hydrolysis which occurs prior to release of AdoMet from the enzyme. The sequence is that of S-adenosylmethionine synthase from Nitratiruptor sp. (strain SB155-2).